The following is a 553-amino-acid chain: Protein YloV (553 aa).

The 193-residue stretch at 9-201 (RTFAEMILAG…LLCVYEGFLA (193 aa)) folds into the DhaL domain.

The sequence is that of Protein YloV (yloV) from Bacillus subtilis (strain 168).